Consider the following 215-residue polypeptide: Large ribosomal subunit protein bL25 (215 aa).

A disordered region spans residues 174–215 (ETVVTVQPPATEKEEETEAAVTDSEPEVINEKEEPAEEAKEE). A compositionally biased stretch (acidic residues) spans 186–215 (KEEETEAAVTDSEPEVINEKEEPAEEAKEE).

This sequence belongs to the bacterial ribosomal protein bL25 family. CTC subfamily. As to quaternary structure, part of the 50S ribosomal subunit; part of the 5S rRNA/L5/L18/L25 subcomplex. Contacts the 5S rRNA. Binds to the 5S rRNA independently of L5 and L18.

Its function is as follows. This is one of the proteins that binds to the 5S RNA in the ribosome where it forms part of the central protuberance. This chain is Large ribosomal subunit protein bL25, found in Halalkalibacterium halodurans (strain ATCC BAA-125 / DSM 18197 / FERM 7344 / JCM 9153 / C-125) (Bacillus halodurans).